A 349-amino-acid chain; its full sequence is Protein-glutamate methylesterase/protein-glutamine glutaminase 1 (349 aa).

Residues 4–119 (RILVVDDSAV…KGFLEDSARR (116 aa)) enclose the Response regulatory domain. Aspartate 53 carries the 4-aspartylphosphate modification. Residues 159-349 (PRAGRAELVV…VASAVLAWAR (191 aa)) enclose the CheB-type methylesterase domain. Residues serine 172, histidine 198, and aspartate 293 contribute to the active site.

This sequence belongs to the CheB family. In terms of processing, phosphorylated by CheA. Phosphorylation of the N-terminal regulatory domain activates the methylesterase activity.

The protein localises to the cytoplasm. The catalysed reaction is [protein]-L-glutamate 5-O-methyl ester + H2O = L-glutamyl-[protein] + methanol + H(+). It carries out the reaction L-glutaminyl-[protein] + H2O = L-glutamyl-[protein] + NH4(+). In terms of biological role, involved in chemotaxis. Part of a chemotaxis signal transduction system that modulates chemotaxis in response to various stimuli. Catalyzes the demethylation of specific methylglutamate residues introduced into the chemoreceptors (methyl-accepting chemotaxis proteins or MCP) by CheR. Also mediates the irreversible deamidation of specific glutamine residues to glutamic acid. The protein is Protein-glutamate methylesterase/protein-glutamine glutaminase 1 of Anaeromyxobacter dehalogenans (strain 2CP-C).